The following is a 314-amino-acid chain: Olfactory receptor 1E1 (314 aa).

The Extracellular portion of the chain corresponds to 1–25; it reads MMGQNQTSISDFLLLGLPIQPEQQN. Asn5 carries an N-linked (GlcNAc...) asparagine glycan. The helical transmembrane segment at 26 to 49 threads the bilayer; that stretch reads LCYALFLAMYLTTLLGNLLIIVLI. The Cytoplasmic portion of the chain corresponds to 50 to 57; the sequence is RLDSHLHT. A helical membrane pass occupies residues 58–79; the sequence is PMYLFLSNLSFSDLCFSSVTIP. Residues 80 to 100 lie on the Extracellular side of the membrane; it reads KLLQNMQNQDPSIPYADCLTQ. The cysteines at positions 97 and 189 are disulfide-linked. A helical transmembrane segment spans residues 101-120; it reads MYFFLLFGDLESFLLVAMAY. Over 121-139 the chain is Cytoplasmic; that stretch reads DRYVAICFALHYTAIMSPM. The chain crosses the membrane as a helical span at residues 140–158; that stretch reads LCLSLVALSWVLTTFHAML. The Extracellular portion of the chain corresponds to 159 to 195; it reads HTLLMARLCFCADNVIPHFFCDMSALLKLACSDTRVN. A helical transmembrane segment spans residues 196–219; it reads EWVIFIMGGLIVVIPFLLILGSYA. At 220–236 the chain is on the cytoplasmic side; the sequence is RIVSSILKVPSSKGICK. The chain crosses the membrane as a helical span at residues 237-259; it reads AFSTCGSHLSVVSLFYGTVIGLY. Over 260–272 the chain is Extracellular; sequence LCPSANSSTLKET. A helical membrane pass occupies residues 273–292; that stretch reads VMAMMYTVVTPMLNPFIYSL. Topologically, residues 293-314 are cytoplasmic; sequence RNGDMKGALSRVIHQKKTFFSL.

This sequence belongs to the G-protein coupled receptor 1 family.

The protein resides in the cell membrane. Its function is as follows. Odorant receptor. This is Olfactory receptor 1E1 (OR1E1) from Gorilla gorilla gorilla (Western lowland gorilla).